Here is a 674-residue protein sequence, read N- to C-terminus: Methionine--tRNA ligase (674 aa).

Positions 11-21 (PYANGDLHLGH) match the 'HIGH' region motif. Zn(2+) is bound by residues cysteine 142, cysteine 145, cysteine 155, and cysteine 158. Positions 330–334 (KMSKS) match the 'KMSKS' region motif. Lysine 333 contributes to the ATP binding site. The tRNA-binding domain maps to 574-674 (DFMKVDLRIA…EGAQPGMRVK (101 aa)).

Belongs to the class-I aminoacyl-tRNA synthetase family. MetG type 1 subfamily. Homodimer. Requires Zn(2+) as cofactor.

Its subcellular location is the cytoplasm. The catalysed reaction is tRNA(Met) + L-methionine + ATP = L-methionyl-tRNA(Met) + AMP + diphosphate. Is required not only for elongation of protein synthesis but also for the initiation of all mRNA translation through initiator tRNA(fMet) aminoacylation. The sequence is that of Methionine--tRNA ligase from Francisella tularensis subsp. holarctica (strain FTNF002-00 / FTA).